The chain runs to 446 residues: tRNA modification GTPase MnmE (446 aa).

Positions 22, 80, and 119 each coordinate (6S)-5-formyl-5,6,7,8-tetrahydrofolate. The region spanning 215-370 is the TrmE-type G domain; sequence GLSLVIAGRP…LKKVIKQVVG (156 aa). N225 lines the K(+) pocket. Residues 225-230, 244-250, and 269-272 contribute to the GTP site; these read NAGKST, TEIAGTT, and DTAG. S229 is a binding site for Mg(2+). T244, I246, and T249 together coordinate K(+). Residue T250 participates in Mg(2+) binding. A (6S)-5-formyl-5,6,7,8-tetrahydrofolate-binding site is contributed by K446.

Belongs to the TRAFAC class TrmE-Era-EngA-EngB-Septin-like GTPase superfamily. TrmE GTPase family. As to quaternary structure, homodimer. Heterotetramer of two MnmE and two MnmG subunits. It depends on K(+) as a cofactor.

The protein resides in the cytoplasm. In terms of biological role, exhibits a very high intrinsic GTPase hydrolysis rate. Involved in the addition of a carboxymethylaminomethyl (cmnm) group at the wobble position (U34) of certain tRNAs, forming tRNA-cmnm(5)s(2)U34. In Legionella pneumophila (strain Corby), this protein is tRNA modification GTPase MnmE.